The sequence spans 351 residues: Probable aldo-keto reductase 2 (351 aa).

Catalysis depends on Tyr-67, which acts as the Proton donor. His-134 serves as a coordination point for substrate. 213 to 223 (SPLGRGFFSAG) provides a ligand contact to NADP(+). Positions 317–351 (YASTDDVRGDRYPQAMANTTWQNSETPPLSSWKAQ) are disordered. Residues 332–351 (MANTTWQNSETPPLSSWKAQ) are compositionally biased toward polar residues.

The protein belongs to the aldo/keto reductase family.

This is Probable aldo-keto reductase 2 from Oryza sativa subsp. japonica (Rice).